Consider the following 351-residue polypeptide: Fruit bromelain (351 aa).

The signal sequence occupies residues 1-24; that stretch reads MASKVQLVFLFLFLCAMWASPSAA. The propeptide at 25–121 is activation peptide; it reads SRDEPNDPMM…VVSFDDVNIS (97 aa). Asn-119 is a glycosylation site (N-linked (GlcNAc...) asparagine). 3 disulfide bridges follow: Cys-144/Cys-184, Cys-178/Cys-217, and Cys-273/Cys-325. The active site involves Cys-147. Catalysis depends on residues His-279 and Asn-300.

It belongs to the peptidase C1 family.

The enzyme catalyses Hydrolysis of proteins with broad specificity for peptide bonds. Bz-Phe-Val-Arg-|-NHMec is a good synthetic substrate, but there is no action on Z-Arg-Arg-|-NHMec (cf. stem bromelain).. In terms of biological role, cysteine proteinase with a high level of diversity in substrate specificity. This is Fruit bromelain from Ananas comosus (Pineapple).